The following is a 394-amino-acid chain: Elongation factor Tu (394 aa).

The tr-type G domain occupies Lys10 to Glu204. The G1 stretch occupies residues Gly19–Thr26. A GTP-binding site is contributed by Gly19–Thr26. Thr26 is a binding site for Mg(2+). The interval Gly60–Ala64 is G2. The G3 stretch occupies residues Asp81–Gly84. Residues Asp81–His85 and Asn136–Asp139 each bind GTP. The segment at Asn136 to Asp139 is G4. Positions Ser174–Leu176 are G5.

It belongs to the TRAFAC class translation factor GTPase superfamily. Classic translation factor GTPase family. EF-Tu/EF-1A subfamily. Monomer.

It localises to the cytoplasm. It carries out the reaction GTP + H2O = GDP + phosphate + H(+). Functionally, GTP hydrolase that promotes the GTP-dependent binding of aminoacyl-tRNA to the A-site of ribosomes during protein biosynthesis. This Vibrio parahaemolyticus serotype O3:K6 (strain RIMD 2210633) protein is Elongation factor Tu.